Here is a 1761-residue protein sequence, read N- to C-terminus: Lysine-specific demethylase 3B (1761 aa).

An N-acetylalanine modification is found at alanine 2. The tract at residues 253–346 is disordered; it reads DNSAPQSEGG…QRAKQPPSTF (94 aa). The segment covering 298-309 has biased composition (basic and acidic residues); the sequence is ASKKLKGDRGEV. Position 361 is an N6-acetyllysine (lysine 361). Disordered stretches follow at residues 370–394 and 438–496; these read QDEPVGGDTPASFTPYSTATGQTPL and DTGL…NGVL. Polar residues-rich tracts occupy residues 380–392, 453–468, and 477–495; these read ASFTPYSTATGQT, SRSQASGENSRNSILA, and PSSSQPLTFGSGRSQSNGV. Residues serine 492, serine 546, serine 556, and serine 560 each carry the phosphoserine modification. The interval 572–603 is disordered; that stretch reads RSVLGTDTKPGSKAGSSVDRKVPAESMPTLTP. Threonine 614 is modified (phosphothreonine). A disordered region spans residues 714-762; that stretch reads GPSLSAMGNGRSSSPTSSLTQPIEMPTLSSSPTEERPTVGPGQQDNPLL. Polar residues predominate over residues 723-745; sequence GRSSSPTSSLTQPIEMPTLSSSP. 4 positions are modified to phosphoserine: serine 766, serine 773, serine 778, and serine 779. Residue lysine 788 forms a Glycyl lysine isopeptide (Lys-Gly) (interchain with G-Cter in SUMO2) linkage. Phosphoserine is present on serine 798. Positions 805–827 are disordered; the sequence is ACRQDSDSSTNSDLSDLSDSEEQ. The C6-type zinc-finger motif lies at 1031–1056; it reads CDVCETTLFNIHWVCRKCGFGVCLDC. A compositionally biased stretch (polar residues) spans 1142 to 1161; that stretch reads GMSQLPSINPSASSGNETTF. A disordered region spans residues 1142-1220; the sequence is GMSQLPSINP…PCPDTAPPSS (79 aa). Residues 1174–1193 are compositionally biased toward basic and acidic residues; that stretch reads EPDHVPKADSTDIRSEEPLK. The span at 1194 to 1204 shows a compositional bias: polar residues; sequence TDSSASNSNSE. A phosphoserine mark is found at serine 1253 and serine 1259. The LXXLL motif motif lies at 1293-1297; the sequence is LRDLL. The JmjC domain occupies 1498–1721; that stretch reads MPTRFEDLME…HCFRLTQEFR (224 aa). Histidine 1560, aspartate 1562, and histidine 1689 together coordinate Fe cation.

This sequence belongs to the JHDM2 histone demethylase family. The cofactor is Fe(2+). In terms of tissue distribution, ubiquitous. Highly expressed in placenta, skeletal muscle, kidney, heart and liver.

It is found in the nucleus. The enzyme catalyses N(6),N(6)-dimethyl-L-lysyl(9)-[histone H3] + 2 2-oxoglutarate + 2 O2 = L-lysyl(9)-[histone H3] + 2 formaldehyde + 2 succinate + 2 CO2. Functionally, histone demethylase that specifically demethylates 'Lys-9' of histone H3, thereby playing a central role in histone code. Demethylation of Lys residue generates formaldehyde and succinate. May have tumor suppressor activity. The polypeptide is Lysine-specific demethylase 3B (KDM3B) (Homo sapiens (Human)).